The chain runs to 647 residues: CRE-binding bZIP protein SKO1 (647 aa).

4 disordered regions span residues 1–119 (MSSE…GSKR), 135–204 (STTN…QMPG), 305–331 (TPTT…TSTK), and 353–429 (KENE…EEQE). Polar residues predominate over residues 51–85 (RNNSTSTITQHSQRSTHSLNSIPEENGNSTVTDNS). S94 carries the phosphoserine modification. T113 carries the phosphothreonine modification. 2 stretches are compositionally biased toward low complexity: residues 138 to 194 (NPSQ…SGNG) and 305 to 329 (TPTT…PNTS). Polar residues-rich tracts occupy residues 357–368 (NLTTQIENNDQF) and 396–405 (RKNSAVTTAP). S399 carries the phosphoserine modification. The 64-residue stretch at 429–492 (ERKRKEFLER…PSSSSNSQFN (64 aa)) folds into the bZIP domain. The segment at 430–451 (RKRKEFLERNRVAASKFRKRKK) is basic motif. Residues 454–461 (IKKIENDL) are leucine-zipper. S558 is subject to Phosphoserine.

Belongs to the bZIP family.

It is found in the nucleus. Its function is as follows. Binds to the CRE motif 5'-TGACGTCA-3' and acts as a repressor of transcription of the SUC2 gene and most probably other genes. This chain is CRE-binding bZIP protein SKO1 (SKO1), found in Saccharomyces cerevisiae (strain ATCC 204508 / S288c) (Baker's yeast).